The chain runs to 415 residues: Dynein assembly factor with WD repeat domains 1 (415 aa).

WD repeat units follow at residues 90 to 129 (AHIL…ELHT), 132 to 174 (GHRN…HTFR), 175 to 214 (GHTA…EVVT), 217 to 256 (GHLA…KVHT), 259 to 298 (GHCA…CVAT), 301 to 340 (GHDD…CITK), 343 to 384 (GHEG…QVLE), and 386 to 415 (HTDE…RIWR).

This sequence belongs to the WD repeat WDR69 family. As to quaternary structure, interacts with IFT46.

The protein localises to the cytoplasm. It localises to the cytoskeleton. The protein resides in the flagellum basal body. Its subcellular location is the flagellum axoneme. In terms of biological role, required for axonemal dynein assembly and ciliary motility in ciliated organs, including Kupffer's vesicle, during embryogenesis. Facilitates the onset of robust cilia motility during development. This is Dynein assembly factor with WD repeat domains 1 (Daw1) from Rattus norvegicus (Rat).